A 38-amino-acid chain; its full sequence is Trypsin inhibitor DE5 beta chain (38 aa).

Belongs to the protease inhibitor I3 (leguminous Kunitz-type inhibitor) family. Heterodimer of an alpha and a beta chain linked by a disulfide bond.

Functionally, inhibition of trypsin. In Adenanthera pavonina (Sandal bead tree), this protein is Trypsin inhibitor DE5 beta chain.